Reading from the N-terminus, the 166-residue chain is uncharacterized protein (166 aa).

This is an uncharacterized protein from Bacillus subtilis (strain 168).